A 448-amino-acid chain; its full sequence is 3-phosphoshikimate 1-carboxyvinyltransferase (448 aa).

Residues Lys28, Ser29, and Arg33 each coordinate 3-phosphoshikimate. A phosphoenolpyruvate-binding site is contributed by Lys28. Phosphoenolpyruvate is bound by residues Gly100 and Arg128. 3-phosphoshikimate is bound by residues Ser173, Gln175, Asp326, and Lys353. A phosphoenolpyruvate-binding site is contributed by Gln175. Residue Asp326 is the Proton acceptor of the active site. 2 residues coordinate phosphoenolpyruvate: Arg357 and Arg405.

Belongs to the EPSP synthase family. Monomer.

It localises to the cytoplasm. The catalysed reaction is 3-phosphoshikimate + phosphoenolpyruvate = 5-O-(1-carboxyvinyl)-3-phosphoshikimate + phosphate. It participates in metabolic intermediate biosynthesis; chorismate biosynthesis; chorismate from D-erythrose 4-phosphate and phosphoenolpyruvate: step 6/7. In terms of biological role, catalyzes the transfer of the enolpyruvyl moiety of phosphoenolpyruvate (PEP) to the 5-hydroxyl of shikimate-3-phosphate (S3P) to produce enolpyruvyl shikimate-3-phosphate and inorganic phosphate. The protein is 3-phosphoshikimate 1-carboxyvinyltransferase of Sinorhizobium fredii (strain NBRC 101917 / NGR234).